The sequence spans 206 residues: Small ribosomal subunit protein uS4 (206 aa).

The S4 RNA-binding domain maps to 96 to 161 (RRLDNVVYRM…QGRIQAALAL (66 aa)).

It belongs to the universal ribosomal protein uS4 family. As to quaternary structure, part of the 30S ribosomal subunit. Contacts protein S5. The interaction surface between S4 and S5 is involved in control of translational fidelity.

Functionally, one of the primary rRNA binding proteins, it binds directly to 16S rRNA where it nucleates assembly of the body of the 30S subunit. In terms of biological role, with S5 and S12 plays an important role in translational accuracy. This chain is Small ribosomal subunit protein uS4, found in Legionella pneumophila (strain Paris).